Here is a 212-residue protein sequence, read N- to C-terminus: Pyrrolidone-carboxylate peptidase (212 aa).

Residues Glu-78, Cys-141, and His-165 contribute to the active site.

This sequence belongs to the peptidase C15 family. As to quaternary structure, homotetramer.

It is found in the cytoplasm. It carries out the reaction Release of an N-terminal pyroglutamyl group from a polypeptide, the second amino acid generally not being Pro.. Its function is as follows. Removes 5-oxoproline from various penultimate amino acid residues except L-proline. The sequence is that of Pyrrolidone-carboxylate peptidase from Staphylococcus aureus (strain Mu3 / ATCC 700698).